The sequence spans 481 residues: MAEVRVRYAPSPTGHLHIGNARTALFNYLFARHAGGKMILRIEDTDQKRNIDGGVESQMKYLEWLGIDWDEGPGRGGEYGPYFQMERLDLYKKYTDELLEKGLAYRCYMTSEELEAEREAQIARGEAPRYSGAHRNLTQEQEEAFVAEGRTPSIRIRVPESVTYTWNDIVKEDVSFESKDFGDWVIVKKDGIPTYNFAVVVDDHLMAISHVLRGDDHISNTPKQMMIYDAFGWEYPTFGHMTLIVNEEHKKLSKRDQSIIQYIEQYKDLGYLPEALLNFVTLLGWSPVGEQEIFTKEEFIEIFDASRLSKSPAVFDQQKLAWINGQYMKHQSFEEVFEASLPFLQDAGRVSSEPTEEELVWAQNLVGLYREQMTHGAEIVELSEMFFEDELVYDEEANTVLAGETVPAVLSEFASQLRTLEEWTPEAIKGAIKATQKATGQKGKNLFMPIRVATTGQTHGPELPNTIQLLGKDRVLARLDA.

The 'HIGH' region signature appears at Pro10–Asn20. The 'KMSKS' region motif lies at Lys251–Arg255. An ATP-binding site is contributed by Lys254.

Belongs to the class-I aminoacyl-tRNA synthetase family. Glutamate--tRNA ligase type 1 subfamily. Monomer.

The protein localises to the cytoplasm. The enzyme catalyses tRNA(Glu) + L-glutamate + ATP = L-glutamyl-tRNA(Glu) + AMP + diphosphate. Its function is as follows. Catalyzes the attachment of glutamate to tRNA(Glu) in a two-step reaction: glutamate is first activated by ATP to form Glu-AMP and then transferred to the acceptor end of tRNA(Glu). In Exiguobacterium sibiricum (strain DSM 17290 / CCUG 55495 / CIP 109462 / JCM 13490 / 255-15), this protein is Glutamate--tRNA ligase.